Reading from the N-terminus, the 197-residue chain is Recombination protein RecR (197 aa).

The C4-type zinc finger occupies 56–71 (CPVCGTLDTRAPCSIC). Residues 79 to 174 (TLICVVRDVA…TVSGLAQGVP (96 aa)) enclose the Toprim domain.

It belongs to the RecR family.

Functionally, may play a role in DNA repair. It seems to be involved in an RecBC-independent recombinational process of DNA repair. It may act with RecF and RecO. This Rhodospirillum rubrum (strain ATCC 11170 / ATH 1.1.1 / DSM 467 / LMG 4362 / NCIMB 8255 / S1) protein is Recombination protein RecR.